The sequence spans 272 residues: Tryptophan synthase alpha chain (272 aa).

Residues Glu-53 and Asp-64 each act as proton acceptor in the active site.

Belongs to the TrpA family. In terms of assembly, tetramer of two alpha and two beta chains.

It catalyses the reaction (1S,2R)-1-C-(indol-3-yl)glycerol 3-phosphate + L-serine = D-glyceraldehyde 3-phosphate + L-tryptophan + H2O. Its pathway is amino-acid biosynthesis; L-tryptophan biosynthesis; L-tryptophan from chorismate: step 5/5. Functionally, the alpha subunit is responsible for the aldol cleavage of indoleglycerol phosphate to indole and glyceraldehyde 3-phosphate. The polypeptide is Tryptophan synthase alpha chain (Xanthomonas campestris pv. campestris (strain B100)).